The chain runs to 787 residues: Phenylalanine--tRNA ligase beta subunit (787 aa).

Residues 39–149 (APAFAGVVIA…EDAPVGTNIR (111 aa)) enclose the tRNA-binding domain. Residues 400-475 (PEAKQVGLRL…RVYGYENIPD (76 aa)) enclose the B5 domain. Residues aspartate 453, aspartate 459, glutamate 462, and glutamate 463 each coordinate Mg(2+). In terms of domain architecture, FDX-ACB spans 694-786 (SKFQPVRRDL…AATAAGARLR (93 aa)).

This sequence belongs to the phenylalanyl-tRNA synthetase beta subunit family. Type 1 subfamily. As to quaternary structure, tetramer of two alpha and two beta subunits. It depends on Mg(2+) as a cofactor.

It localises to the cytoplasm. It carries out the reaction tRNA(Phe) + L-phenylalanine + ATP = L-phenylalanyl-tRNA(Phe) + AMP + diphosphate + H(+). The protein is Phenylalanine--tRNA ligase beta subunit (pheT) of Neisseria meningitidis serogroup B (strain ATCC BAA-335 / MC58).